Here is a 134-residue protein sequence, read N- to C-terminus: Large ribosomal subunit protein eL32 (134 aa).

The protein belongs to the eukaryotic ribosomal protein eL32 family.

This chain is Large ribosomal subunit protein eL32 (RpL32), found in Drosophila acanthoptera (Fruit fly).